Reading from the N-terminus, the 337-residue chain is G-protein coupled receptor 26 (337 aa).

At 1–10 (MNSWDAGLAG) the chain is on the extracellular side. The chain crosses the membrane as a helical span at residues 11–31 (LLVGTIGVSLLSNGLVLLCLL). Residues 32 to 47 (HSADIRRQAPALFTLN) are Cytoplasmic-facing. A helical membrane pass occupies residues 48 to 68 (LTCGNLLCTVVNMPLTLAGVV). Residues 69-81 (AQRQPAGDRLCRL) are Extracellular-facing. A disulfide bond links C79 and C156. The helical transmembrane segment at 82–102 (AAFLDTFLAANSMLSMAALSI) threads the bilayer. At 103-123 (DRWVAVVFPLSYRAKMRLRDA) the chain is on the cytoplasmic side. The chain crosses the membrane as a helical span at residues 124-144 (AFMVAYTWLHALTFPATALAL). The Extracellular segment spans residues 145–168 (SWLGFHQLYASCTLCSRRPDERLR). A helical membrane pass occupies residues 169–189 (FAVFTSAFHALSFLLSFIVLC). At 190 to 245 (FTYLKVLKVARFHCKRIDVITMQTLVLLVDIHPSVRERCLEEQKRRRQRATKKIST) the chain is on the cytoplasmic side. Residues 246 to 266 (FIGTFLVCFAPYVITRLVELF) form a helical membrane-spanning segment. Over 267–276 (STAPIDSHWG) the chain is Extracellular. Residues 277–297 (VLSKCLAYSKAASDPFVYSLL) traverse the membrane as a helical segment. The Cytoplasmic portion of the chain corresponds to 298–337 (RHQYRRSCKELLNRIFNRRSIHSVGLTGDSHSQNILPVSE).

Belongs to the G-protein coupled receptor 1 family. Detected in extracts of several brain regions including striatum, pons, cerebellum and cortex. Not detected in numerous peripheral tissue extracts, except in testis. In the brain, detected in cortical structures including the anterior cingulate area, posterior cingulate and the frontoparietal, somatosensory and piriform cortices. Prominent also in the olfactory tubercle, the islands of Calleja, ventromedial and posterior nuclei of the hypothalamus, the medial septal nucleus, nucleus of the diagonal band and the ventral tegmental area. Localized also to hippocampal structures, with signals strongest over the CA2 and CA3 regions of Ammon's horn and less so over the dentate gyrus. Expressed in the caudate putamen only in its most caudal portion, with a decreasing gradient of signal from the dorsal to ventral aspect. Strong expression associated with a single pontine structure, the inferior olivary nucleus.

The protein resides in the cell membrane. In terms of biological role, orphan receptor. Displays a significant level of constitutive activity. Its effect is mediated by G(s)-alpha protein that stimulate adenylate cyclase, resulting in an elevation of intracellular cAMP. This is G-protein coupled receptor 26 (Gpr26) from Rattus norvegicus (Rat).